We begin with the raw amino-acid sequence, 291 residues long: Pyridoxal 5'-phosphate synthase subunit PdxS (291 aa).

Residue aspartate 23 participates in D-ribose 5-phosphate binding. The Schiff-base intermediate with D-ribose 5-phosphate role is filled by lysine 80. Glycine 152 is a binding site for D-ribose 5-phosphate. Arginine 164 lines the D-glyceraldehyde 3-phosphate pocket. Residues glycine 213 and 234–235 (GS) contribute to the D-ribose 5-phosphate site.

The protein belongs to the PdxS/SNZ family. In terms of assembly, in the presence of PdxT, forms a dodecamer of heterodimers.

The catalysed reaction is aldehydo-D-ribose 5-phosphate + D-glyceraldehyde 3-phosphate + L-glutamine = pyridoxal 5'-phosphate + L-glutamate + phosphate + 3 H2O + H(+). The protein operates within cofactor biosynthesis; pyridoxal 5'-phosphate biosynthesis. Catalyzes the formation of pyridoxal 5'-phosphate from ribose 5-phosphate (RBP), glyceraldehyde 3-phosphate (G3P) and ammonia. The ammonia is provided by the PdxT subunit. Can also use ribulose 5-phosphate and dihydroxyacetone phosphate as substrates, resulting from enzyme-catalyzed isomerization of RBP and G3P, respectively. The sequence is that of Pyridoxal 5'-phosphate synthase subunit PdxS from Clostridium acetobutylicum (strain ATCC 824 / DSM 792 / JCM 1419 / IAM 19013 / LMG 5710 / NBRC 13948 / NRRL B-527 / VKM B-1787 / 2291 / W).